Reading from the N-terminus, the 332-residue chain is Glycerol-3-phosphate dehydrogenase [NAD(P)+] (332 aa).

NADPH contacts are provided by Trp-11, Arg-30, and Lys-108. 3 residues coordinate sn-glycerol 3-phosphate: Lys-108, Gly-137, and Ser-139. Ala-141 is a binding site for NADPH. The sn-glycerol 3-phosphate site is built by Lys-192, Asp-245, Ser-255, Arg-256, and Asn-257. The active-site Proton acceptor is the Lys-192. Position 256 (Arg-256) interacts with NADPH. 2 residues coordinate NADPH: Val-280 and Glu-282.

It belongs to the NAD-dependent glycerol-3-phosphate dehydrogenase family.

The protein resides in the cytoplasm. It carries out the reaction sn-glycerol 3-phosphate + NAD(+) = dihydroxyacetone phosphate + NADH + H(+). The catalysed reaction is sn-glycerol 3-phosphate + NADP(+) = dihydroxyacetone phosphate + NADPH + H(+). It functions in the pathway membrane lipid metabolism; glycerophospholipid metabolism. Catalyzes the reduction of the glycolytic intermediate dihydroxyacetone phosphate (DHAP) to sn-glycerol 3-phosphate (G3P), the key precursor for phospholipid synthesis. The sequence is that of Glycerol-3-phosphate dehydrogenase [NAD(P)+] from Burkholderia cenocepacia (strain HI2424).